The primary structure comprises 1029 residues: Translation initiation factor IF-2 (1029 aa).

Residues R73–E441 form a disordered region. Composition is skewed to acidic residues over residues T106 to E121 and A148 to E177. The segment covering A183 to K196 has biased composition (basic and acidic residues). Composition is skewed to acidic residues over residues T213–A234, T242–V258, and A279–G322. The segment covering K358–D372 has biased composition (basic and acidic residues). The segment covering K373 to K386 has biased composition (basic residues). The segment covering Q400–Q411 has biased composition (low complexity). Basic residues predominate over residues R417–R427. Positions H428–E441 are enriched in basic and acidic residues. One can recognise a tr-type G domain in the interval P524–K696. Positions G533–T540 are G1. G533–T540 serves as a coordination point for GTP. Residues G558 to H562 are G2. The tract at residues D582–G585 is G3. GTP-binding positions include D582–H586 and N636–D639. Residues N636–D639 form a G4 region. Residues S672–K674 are G5.

This sequence belongs to the TRAFAC class translation factor GTPase superfamily. Classic translation factor GTPase family. IF-2 subfamily.

The protein resides in the cytoplasm. Functionally, one of the essential components for the initiation of protein synthesis. Protects formylmethionyl-tRNA from spontaneous hydrolysis and promotes its binding to the 30S ribosomal subunits. Also involved in the hydrolysis of GTP during the formation of the 70S ribosomal complex. This chain is Translation initiation factor IF-2, found in Salinibacter ruber (strain DSM 13855 / M31).